The primary structure comprises 156 residues: ATP synthase subunit b (156 aa).

Residues 7–27 traverse the membrane as a helical segment; the sequence is LFAQIIVFFGLVWFTMKFVWP.

Belongs to the ATPase B chain family. As to quaternary structure, F-type ATPases have 2 components, F(1) - the catalytic core - and F(0) - the membrane proton channel. F(1) has five subunits: alpha(3), beta(3), gamma(1), delta(1), epsilon(1). F(0) has three main subunits: a(1), b(2) and c(10-14). The alpha and beta chains form an alternating ring which encloses part of the gamma chain. F(1) is attached to F(0) by a central stalk formed by the gamma and epsilon chains, while a peripheral stalk is formed by the delta and b chains.

It is found in the cell inner membrane. F(1)F(0) ATP synthase produces ATP from ADP in the presence of a proton or sodium gradient. F-type ATPases consist of two structural domains, F(1) containing the extramembraneous catalytic core and F(0) containing the membrane proton channel, linked together by a central stalk and a peripheral stalk. During catalysis, ATP synthesis in the catalytic domain of F(1) is coupled via a rotary mechanism of the central stalk subunits to proton translocation. Functionally, component of the F(0) channel, it forms part of the peripheral stalk, linking F(1) to F(0). In Neisseria meningitidis serogroup C (strain 053442), this protein is ATP synthase subunit b.